The following is a 273-amino-acid chain: Medium-wave-sensitive opsin 1 (273 aa).

Topologically, residues 1-5 (APRWV) are extracellular. The chain crosses the membrane as a helical span at residues 6–30 (YHLTSAWMVFVVIASVFTNGLVLAA). The Cytoplasmic portion of the chain corresponds to 31 to 42 (TMRFKKLRHPLN). A helical membrane pass occupies residues 43–68 (WILVNLAIADLVETIIASTISVVNQM). Residues 69 to 82 (YGYFVLGHPLCVVE) lie on the Extracellular side of the membrane. A disulfide bridge connects residues Cys79 and Cys156. Residues 83-102 (GYTASLCGITGLWSLAIISW) traverse the membrane as a helical segment. Topologically, residues 103 to 121 (ERWMVVCRPFGNVRFDAKL) are cytoplasmic. A helical transmembrane segment spans residues 122-145 (AIAGIAFSWIWAAVWTAPPIFGWS). Residues 146–171 (RYWPHGLKTSCGPDVFSGSSYPGVQS) lie on the Extracellular side of the membrane. Residues 172–199 (YMIVLMITCCFIPLSVIVLCYLQVWLAI) form a helical membrane-spanning segment. Residues 200–221 (RAVAKQQKESESTQKAEKEVTR) are Cytoplasmic-facing. The chain crosses the membrane as a helical span at residues 222-245 (MVMVMIFAFCLCWGPYAFFACFAA). At 246 to 253 (AHPGYAFH) the chain is on the extracellular side. A helical transmembrane segment spans residues 254–273 (PLVAALPAYFAKSATIYNPI). Lys265 carries the N6-(retinylidene)lysine modification.

It belongs to the G-protein coupled receptor 1 family. Opsin subfamily. As to quaternary structure, monomer. Homodimer. Homotetramer. In terms of processing, O-glycosylated. Post-translationally, phosphorylated on some or all of the serine and threonine residues present in the C-terminal region. As to expression, the three color pigments are found in the cone photoreceptor cells.

It is found in the membrane. Visual pigments are the light-absorbing molecules that mediate vision. They consist of an apoprotein, opsin, covalently linked to cis-retinal. The sequence is that of Medium-wave-sensitive opsin 1 (OPN1MW) from Odocoileus virginianus virginianus (Virginia white-tailed deer).